We begin with the raw amino-acid sequence, 192 residues long: Ion-translocating oxidoreductase complex subunit B (192 aa).

The interval 1-26 (MNAIWIAVVAVSLLGLAFGAILGYAS) is hydrophobic. Residues 32–91 (EDDPVVEKIDEILPQSQCGQCGYPGCRPYAEAIGSQGEKINRCAPGGEAVMLKIATLLNV) form the 4Fe-4S domain. [4Fe-4S] cluster contacts are provided by cysteine 49, cysteine 52, cysteine 57, cysteine 74, cysteine 117, cysteine 120, cysteine 123, cysteine 127, cysteine 147, cysteine 150, cysteine 153, and cysteine 157. 2 consecutive 4Fe-4S ferredoxin-type domains span residues 108-137 (MLAVIDENNCIGCTKCIQACPVDAIVGATR) and 138-167 (AMHTVMSDLCTGCNLCVDPCPTQCIELRPV).

It belongs to the 4Fe4S bacterial-type ferredoxin family. RnfB subfamily. In terms of assembly, the complex is composed of six subunits: RnfA, RnfB, RnfC, RnfD, RnfE and RnfG. It depends on [4Fe-4S] cluster as a cofactor.

It is found in the cell inner membrane. Its function is as follows. Part of a membrane-bound complex that couples electron transfer with translocation of ions across the membrane. The sequence is that of Ion-translocating oxidoreductase complex subunit B from Citrobacter koseri (strain ATCC BAA-895 / CDC 4225-83 / SGSC4696).